Reading from the N-terminus, the 544-residue chain is CTP synthase (544 aa).

Residues 1–265 (MTKFIFVTGG…DNIITEQLQL (265 aa)) form an amidoligase domain region. Serine 13 lines the CTP pocket. Serine 13 is a UTP binding site. ATP-binding positions include 14–19 (SLGKGI) and aspartate 71. Mg(2+) is bound by residues aspartate 71 and glutamate 139. Residues 146-148 (DIE), 186-191 (KTKPTQ), and lysine 222 contribute to the CTP site. Residues 186-191 (KTKPTQ) and lysine 222 each bind UTP. The 255-residue stretch at 290-544 (KIAMVGKYVD…VKAALNNKKA (255 aa)) folds into the Glutamine amidotransferase type-1 domain. Glycine 353 contributes to the L-glutamine binding site. The active-site Nucleophile; for glutamine hydrolysis is cysteine 380. L-glutamine-binding positions include 381-384 (LGMQ), glutamate 404, and arginine 471. Catalysis depends on residues histidine 517 and glutamate 519.

Belongs to the CTP synthase family. Homotetramer.

The catalysed reaction is UTP + L-glutamine + ATP + H2O = CTP + L-glutamate + ADP + phosphate + 2 H(+). It catalyses the reaction L-glutamine + H2O = L-glutamate + NH4(+). The enzyme catalyses UTP + NH4(+) + ATP = CTP + ADP + phosphate + 2 H(+). It participates in pyrimidine metabolism; CTP biosynthesis via de novo pathway; CTP from UDP: step 2/2. With respect to regulation, allosterically activated by GTP, when glutamine is the substrate; GTP has no effect on the reaction when ammonia is the substrate. The allosteric effector GTP functions by stabilizing the protein conformation that binds the tetrahedral intermediate(s) formed during glutamine hydrolysis. Inhibited by the product CTP, via allosteric rather than competitive inhibition. Functionally, catalyzes the ATP-dependent amination of UTP to CTP with either L-glutamine or ammonia as the source of nitrogen. Regulates intracellular CTP levels through interactions with the four ribonucleotide triphosphates. This is CTP synthase from Neisseria meningitidis serogroup A / serotype 4A (strain DSM 15465 / Z2491).